The sequence spans 358 residues: Ion-translocating oxidoreductase complex subunit D (358 aa).

7 consecutive transmembrane segments (helical) span residues Val-16–Trp-36, Phe-38–Val-58, Ile-68–Pro-90, Ala-128–Leu-148, Phe-206–Leu-226, Ile-236–Pro-256, and Pro-286–Ile-306.

The protein belongs to the NqrB/RnfD family. In terms of assembly, the complex is composed of six subunits: RnfA, RnfB, RnfC, RnfD, RnfE and RnfG. Requires FMN as cofactor.

The protein resides in the cellular chromatophore membrane. Its function is as follows. Part of a membrane-bound complex that couples electron transfer with translocation of ions across the membrane. Required for nitrogen fixation. Involved in electron transfer to nitrogenase. The protein is Ion-translocating oxidoreductase complex subunit D of Rhodobacter capsulatus (Rhodopseudomonas capsulata).